A 2543-amino-acid chain; its full sequence is Highly reducing polyketide synthase GPY1 (2543 aa).

The region spanning 9-435 (REPIAIVSMA…GSTAHAVVEF (427 aa)) is the Ketosynthase family 3 (KS3) domain. Active-site for beta-ketoacyl synthase activity residues include cysteine 182, histidine 318, and histidine 358. The tract at residues 574 to 881 (TFTGQGAMWS…PFFATMLRNA (308 aa)) is malonyl-CoA:ACP transacylase (MAT) domain. Residues 953–1089 (HEILGSRCRG…GRAAVLETSK (137 aa)) are N-terminal hotdog fold. The tract at residues 953 to 1253 (HEILGSRCRG…GLQMDRATSD (301 aa)) is dehydratase (DH) domain. The 304-residue stretch at 953–1256 (HEILGSRCRG…MDRATSDDNT (304 aa)) folds into the PKS/mFAS DH domain. The Proton acceptor; for dehydratase activity role is filled by histidine 985. The segment at 1103–1256 (MPLKVPLKSY…MDRATSDDNT (154 aa)) is C-terminal hotdog fold. The Proton donor; for dehydratase activity role is filled by aspartate 1169. The methyltransferase (CMet) domain stretch occupies residues 1399 to 1587 (NDLLYRFYEE…LDEWRNELAA (189 aa)). The interval 1830–2136 (GILESLTMAQ…IEGTSNKQVV (307 aa)) is enoyl reductase (ER) domain. The interval 2161-2335 (TYIITGGLGG…ASSVDLGFVE (175 aa)) is ketoreductase (KR) domain. The 78-residue stretch at 2464-2541 (ALQPFVCTAL…DLSARVSRMI (78 aa)) folds into the Carrier domain. Serine 2501 is subject to O-(pantetheine 4'-phosphoryl)serine.

Its function is as follows. Highly reducing polyketide synthase; part of the gene cluster that mediates the biosynthesis of gibepyrone A, a 2H-pyran-2-one metabolite exhibiting a moderate antimicrobial activity against Gram-positive bacteria and yeasts. The highly reducing polyketide synthase GPY1 is sufficient to produce gibepyrone A. GPY1 uses an acetyl-CoA starter unit, three malonyl-CoA extender units, and two SAM-dependent methylations to establish the gibepyrone A carbon backbone, followed by product release upon intramolecular cyclization. The gibepyrone A derivatives gibepyrones B and D are produced by cluster-independent P450 monooxygenases, probably to protect the fungus from the toxic product. In contrast, the formation of gibepyrones E and F from gibepyrone A is a spontaneous process and independent of enzymatic activity. In Gibberella fujikuroi (strain CBS 195.34 / IMI 58289 / NRRL A-6831) (Bakanae and foot rot disease fungus), this protein is Highly reducing polyketide synthase GPY1.